Consider the following 477-residue polypeptide: 3-isopropylmalate dehydratase large subunit (477 aa).

Residues Cys-358, Cys-419, and Cys-422 each contribute to the [4Fe-4S] cluster site.

Belongs to the aconitase/IPM isomerase family. LeuC type 1 subfamily. Heterodimer of LeuC and LeuD. The cofactor is [4Fe-4S] cluster.

It carries out the reaction (2R,3S)-3-isopropylmalate = (2S)-2-isopropylmalate. It functions in the pathway amino-acid biosynthesis; L-leucine biosynthesis; L-leucine from 3-methyl-2-oxobutanoate: step 2/4. Catalyzes the isomerization between 2-isopropylmalate and 3-isopropylmalate, via the formation of 2-isopropylmaleate. The chain is 3-isopropylmalate dehydratase large subunit from Acinetobacter baylyi (strain ATCC 33305 / BD413 / ADP1).